Consider the following 612-residue polypeptide: UBA domain-containing protein 6 (612 aa).

The 40-residue stretch at Asp3–Gly42 folds into the UBA domain. Ser595 carries the phosphoserine modification.

The protein localises to the cytoplasm. The protein resides in the nucleus. In Schizosaccharomyces pombe (strain 972 / ATCC 24843) (Fission yeast), this protein is UBA domain-containing protein 6 (ucp6).